The following is a 70-amino-acid chain: DNA gyrase inhibitor YacG (70 aa).

4 residues coordinate Zn(2+): Cys-21, Cys-24, Cys-36, and Cys-40.

This sequence belongs to the DNA gyrase inhibitor YacG family. As to quaternary structure, interacts with GyrB. Zn(2+) is required as a cofactor.

Functionally, inhibits all the catalytic activities of DNA gyrase by preventing its interaction with DNA. Acts by binding directly to the C-terminal domain of GyrB, which probably disrupts DNA binding by the gyrase. This chain is DNA gyrase inhibitor YacG, found in Rhizobium meliloti (strain 1021) (Ensifer meliloti).